A 159-amino-acid polypeptide reads, in one-letter code: 2-C-methyl-D-erythritol 2,4-cyclodiphosphate synthase (159 aa).

Residues D8 and H10 each contribute to the a divalent metal cation site. 4-CDP-2-C-methyl-D-erythritol 2-phosphate is bound by residues 8–10 (DVH) and 34–35 (HS). H42 serves as a coordination point for a divalent metal cation. 4-CDP-2-C-methyl-D-erythritol 2-phosphate-binding positions include 56-58 (DIG), 61-65 (FPDTD), 100-106 (AQAPKML), 132-135 (TTTE), F139, and R142.

Belongs to the IspF family. Homotrimer. Requires a divalent metal cation as cofactor.

It carries out the reaction 4-CDP-2-C-methyl-D-erythritol 2-phosphate = 2-C-methyl-D-erythritol 2,4-cyclic diphosphate + CMP. Its pathway is isoprenoid biosynthesis; isopentenyl diphosphate biosynthesis via DXP pathway; isopentenyl diphosphate from 1-deoxy-D-xylulose 5-phosphate: step 4/6. Its function is as follows. Involved in the biosynthesis of isopentenyl diphosphate (IPP) and dimethylallyl diphosphate (DMAPP), two major building blocks of isoprenoid compounds. Catalyzes the conversion of 4-diphosphocytidyl-2-C-methyl-D-erythritol 2-phosphate (CDP-ME2P) to 2-C-methyl-D-erythritol 2,4-cyclodiphosphate (ME-CPP) with a corresponding release of cytidine 5-monophosphate (CMP). The chain is 2-C-methyl-D-erythritol 2,4-cyclodiphosphate synthase from Klebsiella pneumoniae subsp. pneumoniae (strain ATCC 700721 / MGH 78578).